The following is a 146-amino-acid chain: ATP synthase epsilon chain (146 aa).

This sequence belongs to the ATPase epsilon chain family. As to quaternary structure, F-type ATPases have 2 components, CF(1) - the catalytic core - and CF(0) - the membrane proton channel. CF(1) has five subunits: alpha(3), beta(3), gamma(1), delta(1), epsilon(1). CF(0) has three main subunits: a, b and c.

Its subcellular location is the cell membrane. Its function is as follows. Produces ATP from ADP in the presence of a proton gradient across the membrane. This chain is ATP synthase epsilon chain, found in Lactobacillus helveticus (strain DPC 4571).